We begin with the raw amino-acid sequence, 301 residues long: uncharacterized protein (301 aa).

Positions 1 to 26 are cleaved as a signal peptide; sequence MKGFSCSRPGYLTGLLLLAVAPILTA. Cys-27 carries N-palmitoyl cysteine lipidation. The S-diacylglycerol cysteine moiety is linked to residue Cys-27. A TNase-like domain is found at 46–243; that stretch reads KLKPATIEYW…YNAKINIWSH (198 aa). The segment at 64–136 is disordered; sequence NYASEERRKE…SKGDSTGDEK (73 aa). 2 stretches are compositionally biased toward basic and acidic residues: residues 67-95 and 120-136; these read SEER…KTED and TPEK…GDEK.

It is found in the cell membrane. This is an uncharacterized protein from Mycoplasma pneumoniae (strain ATCC 29342 / M129 / Subtype 1) (Mycoplasmoides pneumoniae).